The chain runs to 94 residues: Large ribosomal subunit protein bL25 (94 aa).

The disordered stretch occupies residues 1 to 20; sequence MFKFNAEVRQSQGKGASRRL.

Belongs to the bacterial ribosomal protein bL25 family. As to quaternary structure, part of the 50S ribosomal subunit; part of the 5S rRNA/L5/L18/L25 subcomplex. Contacts the 5S rRNA. Binds to the 5S rRNA independently of L5 and L18.

Functionally, this is one of the proteins that binds to the 5S RNA in the ribosome where it forms part of the central protuberance. The chain is Large ribosomal subunit protein bL25 from Pasteurella multocida (strain Pm70).